The following is a 146-amino-acid chain: MYIIYGADHRISNCSLLKRRIPEARIFKLYPNDKTSRSSSASVAIPDYETQGQTAGQITPKSWLCMLSSTVPATKSSEWIFDTGCTSHMCHDRSIFSSFTRSSRKDFVRGVGGSIPIMGSGTVNIGTVQLHDVSYVPDLPVNLISV.

The protein is Putative transposon Ty5-1 protein YCL075W (TY5B) of Saccharomyces cerevisiae (strain ATCC 204508 / S288c) (Baker's yeast).